The chain runs to 97 residues: Co-chaperonin GroES (97 aa).

This sequence belongs to the GroES chaperonin family. In terms of assembly, heptamer of 7 subunits arranged in a ring. Interacts with the chaperonin GroEL.

The protein resides in the cytoplasm. Functionally, together with the chaperonin GroEL, plays an essential role in assisting protein folding. The GroEL-GroES system forms a nano-cage that allows encapsulation of the non-native substrate proteins and provides a physical environment optimized to promote and accelerate protein folding. GroES binds to the apical surface of the GroEL ring, thereby capping the opening of the GroEL channel. The sequence is that of Co-chaperonin GroES from Aeromonas salmonicida (strain A449).